A 398-amino-acid chain; its full sequence is Nematocin receptor 2 (398 aa).

Residues Met-1 to Val-25 are Extracellular-facing. 2 N-linked (GlcNAc...) asparagine glycosylation sites follow: Asn-3 and Asn-7. The chain crosses the membrane as a helical span at residues Tyr-26–Phe-46. Residues Arg-47–Pro-58 are Cytoplasmic-facing. Residues Val-59–Gly-79 traverse the membrane as a helical segment. Residues Thr-80–Lys-99 are Extracellular-facing. Cys-98 and Cys-173 are disulfide-bonded. The helical transmembrane segment at Leu-100 to Ser-120 threads the bilayer. Residues Ala-121–Asn-143 are Cytoplasmic-facing. The chain crosses the membrane as a helical span at residues Trp-144–Trp-164. At Thr-165–Thr-187 the chain is on the extracellular side. Residues Tyr-188–Tyr-208 traverse the membrane as a helical segment. Over Tyr-209–Leu-271 the chain is Cytoplasmic. Residues Thr-272 to Ile-292 traverse the membrane as a helical segment. Topologically, residues Gln-293–Ile-302 are extracellular. Residues Met-303 to Leu-325 traverse the membrane as a helical segment. At Phe-326 to Asn-398 the chain is on the cytoplasmic side.

Belongs to the G-protein coupled receptor 1 family. Vasopressin/oxytocin receptor subfamily. As to expression, detected in the ADL sensory neurons, the RMED and RMEV motor neurons, and the PQR tail neuron. In males, detected in SPC tail neurons involved in spicule penetration and sperm transfer, and male-specific oblique muscles involved in vulval contact.

It is found in the cell membrane. Not directly activated by nematocin. May modulate activity of the nematocin receptor ntr-1, leading to reduced intracellular cAMP production. Plays a role in male mating behavior. The polypeptide is Nematocin receptor 2 (Caenorhabditis elegans).